Here is a 466-residue protein sequence, read N- to C-terminus: tRNA modification GTPase MnmE (466 aa).

Arg-24, Glu-85, and Lys-128 together coordinate (6S)-5-formyl-5,6,7,8-tetrahydrofolate. In terms of domain architecture, TrmE-type G spans Gly-224–Gly-384. Asn-234 is a binding site for K(+). GTP contacts are provided by residues Asn-234–Ser-239, Thr-253–Thr-259, and Asp-278–Gly-281. Position 238 (Ser-238) interacts with Mg(2+). Residues Thr-253, Ile-255, and Thr-258 each contribute to the K(+) site. Thr-259 serves as a coordination point for Mg(2+). Lys-466 is a binding site for (6S)-5-formyl-5,6,7,8-tetrahydrofolate.

This sequence belongs to the TRAFAC class TrmE-Era-EngA-EngB-Septin-like GTPase superfamily. TrmE GTPase family. Homodimer. Heterotetramer of two MnmE and two MnmG subunits. Requires K(+) as cofactor.

The protein resides in the cytoplasm. In terms of biological role, exhibits a very high intrinsic GTPase hydrolysis rate. Involved in the addition of a carboxymethylaminomethyl (cmnm) group at the wobble position (U34) of certain tRNAs, forming tRNA-cmnm(5)s(2)U34. In Herminiimonas arsenicoxydans, this protein is tRNA modification GTPase MnmE.